Reading from the N-terminus, the 948-residue chain is RNA polymerase-associated protein RapA (948 aa).

The region spanning glutamate 164–asparagine 332 is the Helicase ATP-binding domain. Aspartate 177–threonine 184 contributes to the ATP binding site. The DEAH box motif lies at aspartate 278 to histidine 281. Residues arginine 473 to histidine 627 form the Helicase C-terminal domain.

This sequence belongs to the SNF2/RAD54 helicase family. RapA subfamily. In terms of assembly, interacts with the RNAP. Has a higher affinity for the core RNAP than for the holoenzyme. Its ATPase activity is stimulated by binding to RNAP.

In terms of biological role, transcription regulator that activates transcription by stimulating RNA polymerase (RNAP) recycling in case of stress conditions such as supercoiled DNA or high salt concentrations. Probably acts by releasing the RNAP, when it is trapped or immobilized on tightly supercoiled DNA. Does not activate transcription on linear DNA. Probably not involved in DNA repair. In Pseudomonas putida (strain ATCC 700007 / DSM 6899 / JCM 31910 / BCRC 17059 / LMG 24140 / F1), this protein is RNA polymerase-associated protein RapA.